The following is a 224-amino-acid chain: Probable amino-acid permease protein YxeN (224 aa).

Helical transmembrane passes span 3–23 (TIDW…LPIT), 24–44 (LFMA…LALI), 58–78 (LYIS…IYYG), 91–111 (ALTA…AEIF), 157–177 (FIGL…EMFA), and 190–210 (FETY…YSIL). Residues 20–211 (LPITLFMAIA…VLTIIYSILQ (192 aa)) enclose the ABC transmembrane type-1 domain.

It belongs to the binding-protein-dependent transport system permease family. In terms of assembly, the complex is composed of two ATP-binding proteins (YxeO), two transmembrane proteins (YxeN) and a solute-binding protein (YxeM).

It is found in the cell membrane. In terms of biological role, probably part of the ABC transporter complex YxeMNO that could be involved in amino-acid import. May transport S-methylcysteine. Probably responsible for the translocation of the substrate across the membrane. This chain is Probable amino-acid permease protein YxeN (yxeN), found in Bacillus subtilis (strain 168).